The following is a 562-amino-acid chain: Adenylate kinase isoenzyme 5 (562 aa).

2 adenylate kinase regions span residues 133-316 (KIIL…VAVD) and 377-559 (KIIF…TAID). 142-147 (GSGKGT) contacts ATP. The segment at 162–193 (SVGELLRKKIHSASSNRKWSLIAKIITNGELA) is NMP 1. AMP-binding positions include Arg168, 191–193 (ELA), 219–222 (GFPR), and Gln226. The segment at 256-266 (KRAEQQGRPDD) is LID 1. Arg257 is a binding site for ATP. Positions 263 and 274 each coordinate AMP. 386–391 (GSGKGT) is a binding site for ATP. The tract at residues 406-435 (STGELLRQELTSESERSKLIRDIMERGDLV) is NMP 2. Residues Thr407, Arg412, 433–435 (DLV), 462–465 (GYPR), and Gln469 contribute to the AMP site. The segment at 499-509 (QRSQSSQRGED) is LID 2. ATP is bound at residue Arg500. AMP-binding residues include Arg506 and Arg517. Gly545 is an ATP binding site.

It belongs to the adenylate kinase family. Monomer. Interacts with YWHAZ. Brain specific.

Its subcellular location is the cytoplasm. The enzyme catalyses AMP + ATP = 2 ADP. It catalyses the reaction a 2'-deoxyribonucleoside 5'-diphosphate + ATP = a 2'-deoxyribonucleoside 5'-triphosphate + ADP. It carries out the reaction a ribonucleoside 5'-diphosphate + ATP = a ribonucleoside 5'-triphosphate + ADP. In terms of biological role, nucleoside monophosphate (NMP) kinase that catalyzes the reversible transfer of the terminal phosphate group between nucleoside triphosphates and monophosphates. Active on AMP and dAMP with ATP as a donor. When GTP is used as phosphate donor, the enzyme phosphorylates AMP, CMP, and to a small extent dCMP. Also displays broad nucleoside diphosphate kinase activity. This is Adenylate kinase isoenzyme 5 (Ak5) from Mus musculus (Mouse).